The following is a 691-amino-acid chain: Transcription termination factor Rho (691 aa).

A disordered region spans residues 48–303; it reads ISDHQRGGSV…PEVDETELTE (256 aa). A compositionally biased stretch (basic and acidic residues) spans 50–64; that stretch reads DHQRGGSVADRDAAE. Low complexity-rich tracts occupy residues 65–92 and 105–119; these read RAAQAPAAPAAETAPAAASSEDAAPAAE and DTSAPAAAQDGQPQA. Composition is skewed to basic and acidic residues over residues 120-158 and 188-273; these read EAREAQTEQAPRETASDQDRSGGSEARDEGEDRPQSERR and DADR…EGGR. The 84-residue stretch at 307 to 390 folds into the Rho RNA-BD domain; that stretch reads LQPVAGILDV…VKISSVNGQP (84 aa). ATP is bound by residues 433–438, 445–450, and arginine 476; these read GKGQRG and KAGKTM.

It belongs to the Rho family. As to quaternary structure, homohexamer. The homohexamer assembles into an open ring structure.

In terms of biological role, facilitates transcription termination by a mechanism that involves Rho binding to the nascent RNA, activation of Rho's RNA-dependent ATPase activity, and release of the mRNA from the DNA template. The protein is Transcription termination factor Rho of Micrococcus luteus (Micrococcus lysodeikticus).